Reading from the N-terminus, the 954-residue chain is Glycine dehydrogenase (decarboxylating) (954 aa).

Lysine 704 is subject to N6-(pyridoxal phosphate)lysine.

The protein belongs to the GcvP family. As to quaternary structure, the glycine cleavage system is composed of four proteins: P, T, L and H. The cofactor is pyridoxal 5'-phosphate.

It catalyses the reaction N(6)-[(R)-lipoyl]-L-lysyl-[glycine-cleavage complex H protein] + glycine + H(+) = N(6)-[(R)-S(8)-aminomethyldihydrolipoyl]-L-lysyl-[glycine-cleavage complex H protein] + CO2. The glycine cleavage system catalyzes the degradation of glycine. The P protein binds the alpha-amino group of glycine through its pyridoxal phosphate cofactor; CO(2) is released and the remaining methylamine moiety is then transferred to the lipoamide cofactor of the H protein. This chain is Glycine dehydrogenase (decarboxylating), found in Allorhizobium ampelinum (strain ATCC BAA-846 / DSM 112012 / S4) (Agrobacterium vitis (strain S4)).